The chain runs to 149 residues: 18 kDa antigen 1 (149 aa).

In terms of domain architecture, sHSP spans 21–131; the sequence is TAARPAVMPM…KPRKIAVGRG (111 aa).

The protein belongs to the small heat shock protein (HSP20) family.

In terms of biological role, not known. This protein is one of the major immune reactive proteins in mycobacteria. This is 18 kDa antigen 1 from Mycobacterium intracellulare.